Reading from the N-terminus, the 493-residue chain is CBL-interacting protein kinase 26 (493 aa).

The 255-residue stretch at 12–266 (YEIGRQLGQG…IPKIKRSAWY (255 aa)) folds into the Protein kinase domain. ATP-binding positions include 18–26 (LGQGNFAKV) and lysine 41. Residue aspartate 134 is the Proton acceptor of the active site. Residues 152 to 181 (DFGLSALSESKRHDGLLHTTCGTPAYVAPE) are activation loop. The disordered stretch occupies residues 311–332 (KVYTNGEATTSDSPECSNSDGK). The span at 316-332 (GEATTSDSPECSNSDGK) shows a compositional bias: polar residues. The NAF domain occupies 320-360 (TSDSPECSNSDGKQASLSLPNLNAFDIISLSTGFDLSNLFE). The PPI stretch occupies residues 365–394 (RREERFTTRQPAAAIFAKLNELARRFKLKI). Residues 465–493 (GQHQQPEQSMQGMQGEQQPSRLPSQQPQG) are disordered.

Belongs to the protein kinase superfamily. CAMK Ser/Thr protein kinase family. SNF1 subfamily. Mn(2+) is required as a cofactor.

The catalysed reaction is L-seryl-[protein] + ATP = O-phospho-L-seryl-[protein] + ADP + H(+). The enzyme catalyses L-threonyl-[protein] + ATP = O-phospho-L-threonyl-[protein] + ADP + H(+). In terms of biological role, CIPK serine-threonine protein kinases interact with CBL proteins. Binding of a CBL protein to the regulatory NAF domain of CIPK protein lead to the activation of the kinase in a calcium-dependent manner. The protein is CBL-interacting protein kinase 26 (CIPK26) of Oryza sativa subsp. japonica (Rice).